Consider the following 415-residue polypeptide: Adenosylhomocysteinase (415 aa).

The substrate site is built by Thr-53, Asp-124, and Glu-147. An NAD(+)-binding site is contributed by 148–150 (TTT). Substrate is bound by residues Lys-177 and Asp-181. NAD(+) is bound by residues Asn-182, 211–216 (GYGWVG), Glu-234, Asn-269, 290–292 (SGH), and Asn-337.

It belongs to the adenosylhomocysteinase family. NAD(+) is required as a cofactor.

The protein resides in the cytoplasm. The catalysed reaction is S-adenosyl-L-homocysteine + H2O = L-homocysteine + adenosine. Its pathway is amino-acid biosynthesis; L-homocysteine biosynthesis; L-homocysteine from S-adenosyl-L-homocysteine: step 1/1. In terms of biological role, may play a key role in the regulation of the intracellular concentration of adenosylhomocysteine. In Sulfurisphaera tokodaii (strain DSM 16993 / JCM 10545 / NBRC 100140 / 7) (Sulfolobus tokodaii), this protein is Adenosylhomocysteinase.